The chain runs to 514 residues: Pantothenate transporter liz1 (514 aa).

Transmembrane regions (helical) follow at residues 24-44 (LLIK…FINY), 72-92 (INVV…YALQ), 98-118 (LWFS…FAVH), 128-148 (FFMA…LGAW), 159-179 (GIFS…QTAV), 194-214 (WLFI…LFLF), 263-283 (GLCI…NVLM), 300-320 (NYPT…SVIS), 329-349 (WPFG…LLAW), 357-377 (FFAY…FSWA), 390-410 (VVVF…APIM), and 423-443 (LIGL…VSYM).

Belongs to the major facilitator superfamily. Allantoate permease family.

Its subcellular location is the cell membrane. In terms of biological role, transports pantothenate into the cell. This is Pantothenate transporter liz1 (liz1) from Schizosaccharomyces pombe (strain 972 / ATCC 24843) (Fission yeast).